A 233-amino-acid chain; its full sequence is Phosphoribosylformylglycinamidine synthase subunit PurQ (233 aa).

In terms of domain architecture, Glutamine amidotransferase type-1 spans 3-233 (SAILVFPGIN…GLVEHLAKAA (231 aa)). The Nucleophile role is filled by cysteine 87. Residues histidine 204 and glutamate 206 contribute to the active site.

Part of the FGAM synthase complex composed of 1 PurL, 1 PurQ and 2 PurS subunits.

It is found in the cytoplasm. It carries out the reaction N(2)-formyl-N(1)-(5-phospho-beta-D-ribosyl)glycinamide + L-glutamine + ATP + H2O = 2-formamido-N(1)-(5-O-phospho-beta-D-ribosyl)acetamidine + L-glutamate + ADP + phosphate + H(+). It catalyses the reaction L-glutamine + H2O = L-glutamate + NH4(+). It functions in the pathway purine metabolism; IMP biosynthesis via de novo pathway; 5-amino-1-(5-phospho-D-ribosyl)imidazole from N(2)-formyl-N(1)-(5-phospho-D-ribosyl)glycinamide: step 1/2. Its function is as follows. Part of the phosphoribosylformylglycinamidine synthase complex involved in the purines biosynthetic pathway. Catalyzes the ATP-dependent conversion of formylglycinamide ribonucleotide (FGAR) and glutamine to yield formylglycinamidine ribonucleotide (FGAM) and glutamate. The FGAM synthase complex is composed of three subunits. PurQ produces an ammonia molecule by converting glutamine to glutamate. PurL transfers the ammonia molecule to FGAR to form FGAM in an ATP-dependent manner. PurS interacts with PurQ and PurL and is thought to assist in the transfer of the ammonia molecule from PurQ to PurL. The protein is Phosphoribosylformylglycinamidine synthase subunit PurQ of Rhodopseudomonas palustris (strain BisB18).